We begin with the raw amino-acid sequence, 795 residues long: ATP-dependent RNA helicase DHX15 (795 aa).

The interval 1 to 111 (MSKRHRLDLG…HTGHTGHTSL (111 aa)) is disordered. Residue serine 15 is modified to Phosphoserine. Residues 20–62 (AGTDGKDRERDRDREDRSKDRDRERDRGDREREREKEKEKELR) are compositionally biased toward basic and acidic residues. Residues 79–110 (ASHSAHSTHSAHSTHSTHSAHSTHTGHTGHTS) show a composition bias toward low complexity. The 167-residue stretch at 147 to 313 (TDILVRHQSF…FDNCPLLTIP (167 aa)) folds into the Helicase ATP-binding domain. Position 160 to 167 (160 to 167 (GETGSGKT)) interacts with ATP. Positions 260–263 (DEAH) match the DEAH box motif. The Helicase C-terminal domain occupies 338 to 518 (TVIQIHMCEE…SVVLQLKKLG (181 aa)). Lysine 488 is modified (N6-acetyllysine). A Glycyl lysine isopeptide (Lys-Gly) (interchain with G-Cter in SUMO2) cross-link involves residue lysine 786.

This sequence belongs to the DEAD box helicase family. DEAH subfamily. DDX15/PRP43 sub-subfamily. As to quaternary structure, component of the U11/U12 snRNPs that are part of the U12-type spliceosome. Identified in the Intron Large spliceosome complex (IL, also named intron lariat spliceosome), a post-mRNA release spliceosomal complex containing the excised intron, U2, U5 and U6 snRNPs, and splicing factors; the association may be transient. The IL complex exists in two distinct conformations, one with the DHX15 (ILS2) and one without (ILS1). Interacts with TFIP11 (via G-patch domain); indicative for a recruitment to the IL complex. Interacts with SSB/La. Interacts with GPATCH2 (via G-patch domain); promoting the RNA helicase activity. Interacts with NKRF (via G-patch domain); promoting the RNA helicase activity. Interacts with NLRP6. In terms of tissue distribution, ubiquitous.

Its subcellular location is the nucleus. The protein resides in the nucleolus. The catalysed reaction is ATP + H2O = ADP + phosphate + H(+). With respect to regulation, ATPase activity is enhanced upon binding to G-patch domain-containing proteins. G-patch domain-containing proteins act like a brace that tethers mobile sections of DHX15 together, stabilizing a functional conformation with high RNA affinity, thereby promoting the ATPase activity. Functionally, RNA helicase involved in mRNA processing and antiviral innate immunity. Pre-mRNA processing factor involved in disassembly of spliceosomes after the release of mature mRNA. In cooperation with TFIP11 seem to be involved in the transition of the U2, U5 and U6 snRNP-containing IL complex to the snRNP-free IS complex leading to efficient debranching and turnover of excised introns. Plays a key role in antiviral innate immunity by promoting both MAVS-dependent signaling and NLRP6 inflammasome. Acts as an RNA virus sensor: recognizes and binds viral double stranded RNA (dsRNA) and activates the MAVS-dependent signaling to produce interferon-beta and interferon lambda-3 (IFNL3). Involved in intestinal antiviral innate immunity together with NLRP6: recognizes and binds viral dsRNA and promotes activation of the NLRP6 inflammasome in intestinal epithelial cells to restrict infection by enteric viruses. The NLRP6 inflammasome acts by promoting maturation and secretion of IL18 in the extracellular milieu. Also involved in antibacterial innate immunity by promoting Wnt-induced antimicrobial protein expression in Paneth cells. In Mus musculus (Mouse), this protein is ATP-dependent RNA helicase DHX15.